A 415-amino-acid polypeptide reads, in one-letter code: Actin-like protein 7B (415 aa).

The segment at 1–35 is disordered; the sequence is MATRNSPMALGTAQGDPGEAGTRPGSDAGLRDTGA. S6 is modified (phosphoserine).

It belongs to the actin family.

The protein localises to the cytoplasm. Its subcellular location is the cytoskeleton. This Macaca fascicularis (Crab-eating macaque) protein is Actin-like protein 7B (ACTL7B).